The chain runs to 602 residues: Cholinesterase (602 aa).

A signal peptide spans 1 to 28; sequence MQSKGTIISIQFLLRFLLLWVLIGKSHT. Asparagine 85 carries N-linked (GlcNAc...) asparagine glycosylation. A disulfide bridge connects residues cysteine 93 and cysteine 120. Asparagine 134 carries an N-linked (GlcNAc...) asparagine glycan. 144-145 contributes to the substrate binding site; that stretch reads GG. Serine 226 (acyl-ester intermediate) is an active-site residue. Serine 226 bears the Phosphoserine mark. Residues asparagine 269 and asparagine 284 are each glycosylated (N-linked (GlcNAc...) asparagine). Cysteine 280 and cysteine 291 are joined by a disulfide. The Charge relay system role is filled by glutamate 353. N-linked (GlcNAc...) asparagine glycosylation is present at asparagine 369. A disulfide bond links cysteine 428 and cysteine 547. Histidine 466 acts as the Charge relay system in catalysis. N-linked (GlcNAc...) asparagine glycans are attached at residues asparagine 483, asparagine 509, asparagine 513, and asparagine 514.

The protein belongs to the type-B carboxylesterase/lipase family. In terms of assembly, homotetramer; disulfide-linked. Dimer of dimers.

The protein localises to the secreted. The catalysed reaction is an acylcholine + H2O = a carboxylate + choline + H(+). Esterase with broad substrate specificity. Contributes to the inactivation of the neurotransmitter acetylcholine. Can degrade neurotoxic organophosphate esters. The chain is Cholinesterase (BCHE) from Panthera tigris tigris (Bengal tiger).